The following is a 740-amino-acid chain: DNA-directed RNA polymerase subunit beta' (740 aa).

Residues Cys-65, Cys-67, Cys-103, and Cys-106 each coordinate Zn(2+). Residues Asp-539, Asp-541, and Asp-543 each contribute to the Mg(2+) site.

This sequence belongs to the RNA polymerase beta' chain family. RpoC1 subfamily. In plastids the minimal PEP RNA polymerase catalytic core is composed of four subunits: alpha, beta, beta', and beta''. When a (nuclear-encoded) sigma factor is associated with the core the holoenzyme is formed, which can initiate transcription. Mg(2+) serves as cofactor. The cofactor is Zn(2+).

The protein resides in the plastid. It localises to the chloroplast. The enzyme catalyses RNA(n) + a ribonucleoside 5'-triphosphate = RNA(n+1) + diphosphate. In terms of biological role, DNA-dependent RNA polymerase catalyzes the transcription of DNA into RNA using the four ribonucleoside triphosphates as substrates. The protein is DNA-directed RNA polymerase subunit beta' of Ostreococcus tauri.